The sequence spans 166 residues: Large ribosomal subunit protein uL10 (166 aa).

This sequence belongs to the universal ribosomal protein uL10 family. As to quaternary structure, part of the ribosomal stalk of the 50S ribosomal subunit. The N-terminus interacts with L11 and the large rRNA to form the base of the stalk. The C-terminus forms an elongated spine to which L12 dimers bind in a sequential fashion forming a multimeric L10(L12)X complex.

Forms part of the ribosomal stalk, playing a central role in the interaction of the ribosome with GTP-bound translation factors. This chain is Large ribosomal subunit protein uL10, found in Streptococcus gordonii (strain Challis / ATCC 35105 / BCRC 15272 / CH1 / DL1 / V288).